We begin with the raw amino-acid sequence, 426 residues long: Chaperone SurA (426 aa).

Positions 1–13 (MLGALFLSTAASA) are cleaved as a signal peptide. PpiC domains lie at 164 to 265 (SEEL…KLLD) and 274 to 373 (RDEV…EVLG).

The protein resides in the periplasm. The catalysed reaction is [protein]-peptidylproline (omega=180) = [protein]-peptidylproline (omega=0). Chaperone involved in the correct folding and assembly of outer membrane proteins. Recognizes specific patterns of aromatic residues and the orientation of their side chains, which are found more frequently in integral outer membrane proteins. May act in both early periplasmic and late outer membrane-associated steps of protein maturation. The chain is Chaperone SurA from Pseudomonas fluorescens (strain ATCC BAA-477 / NRRL B-23932 / Pf-5).